Reading from the N-terminus, the 547-residue chain is Chaperonin GroEL (547 aa).

Residues 30 to 33 (TLGP), lysine 51, 87 to 91 (DGTTT), glycine 415, and aspartate 496 contribute to the ATP site. Residues 528–547 (KEEPMPMRGSGMGGMGGMDF) are disordered. Gly residues predominate over residues 537 to 547 (SGMGGMGGMDF).

This sequence belongs to the chaperonin (HSP60) family. In terms of assembly, forms a cylinder of 14 subunits composed of two heptameric rings stacked back-to-back. Interacts with the co-chaperonin GroES.

The protein localises to the cytoplasm. The enzyme catalyses ATP + H2O + a folded polypeptide = ADP + phosphate + an unfolded polypeptide.. In terms of biological role, together with its co-chaperonin GroES, plays an essential role in assisting protein folding. The GroEL-GroES system forms a nano-cage that allows encapsulation of the non-native substrate proteins and provides a physical environment optimized to promote and accelerate protein folding. This Rickettsia canadensis (strain McKiel) protein is Chaperonin GroEL.